A 69-amino-acid chain; its full sequence is Pleurain-A4 (69 aa).

The first 22 residues, Met1–Cys22, serve as a signal peptide directing secretion. Positions Lys23–Arg43 are excised as a propeptide. The cysteines at positions 63 and 69 are disulfide-linked.

The protein belongs to the frog skin active peptide (FSAP) family. Pleurain subfamily. As to expression, expressed by the skin glands.

The protein resides in the secreted. In terms of biological role, antimicrobial peptide. Has activity against Gram-positive and -negative bacteria, and fungi. Has little hemolytic activity on red blood cells. The protein is Pleurain-A4 of Nidirana pleuraden (Yunnan pond frog).